The sequence spans 234 residues: Uridylate kinase (234 aa).

Residue 9-10 (GS) participates in ATP binding. G43 lines the UMP pocket. ATP contacts are provided by G44 and R48. UMP contacts are provided by residues D65 and 113 to 119 (VIPGQTT). Residues T139, Y145, and D148 each contribute to the ATP site.

It belongs to the UMP kinase family. As to quaternary structure, homohexamer.

Its subcellular location is the cytoplasm. The catalysed reaction is UMP + ATP = UDP + ADP. The protein operates within pyrimidine metabolism; CTP biosynthesis via de novo pathway; UDP from UMP (UMPK route): step 1/1. Inhibited by UTP. Catalyzes the reversible phosphorylation of UMP to UDP. This is Uridylate kinase from Methanococcoides burtonii (strain DSM 6242 / NBRC 107633 / OCM 468 / ACE-M).